Here is a 223-residue protein sequence, read N- to C-terminus: NADH-quinone oxidoreductase subunit C (223 aa).

This sequence belongs to the complex I 30 kDa subunit family. In terms of assembly, NDH-1 is composed of 14 different subunits. Subunits NuoB, C, D, E, F, and G constitute the peripheral sector of the complex.

Its subcellular location is the cell inner membrane. It carries out the reaction a quinone + NADH + 5 H(+)(in) = a quinol + NAD(+) + 4 H(+)(out). NDH-1 shuttles electrons from NADH, via FMN and iron-sulfur (Fe-S) centers, to quinones in the respiratory chain. The immediate electron acceptor for the enzyme in this species is believed to be ubiquinone. Couples the redox reaction to proton translocation (for every two electrons transferred, four hydrogen ions are translocated across the cytoplasmic membrane), and thus conserves the redox energy in a proton gradient. The sequence is that of NADH-quinone oxidoreductase subunit C from Hydrogenovibrio crunogenus (strain DSM 25203 / XCL-2) (Thiomicrospira crunogena).